A 263-amino-acid chain; its full sequence is uncharacterized protein (263 aa).

Residues 12-247 (LETQNLAIGY…ENLAKIYRTS (236 aa)) enclose the ABC transporter domain. 44-51 (GANGAGKS) is an ATP binding site.

This sequence belongs to the ABC transporter superfamily.

This is an uncharacterized protein from Haemophilus influenzae (strain ATCC 51907 / DSM 11121 / KW20 / Rd).